We begin with the raw amino-acid sequence, 559 residues long: Formate--tetrahydrofolate ligase (559 aa).

68 to 75 (TPAGEGKT) is an ATP binding site.

It belongs to the formate--tetrahydrofolate ligase family.

It catalyses the reaction (6S)-5,6,7,8-tetrahydrofolate + formate + ATP = (6R)-10-formyltetrahydrofolate + ADP + phosphate. It participates in one-carbon metabolism; tetrahydrofolate interconversion. This Rhizobium meliloti (strain 1021) (Ensifer meliloti) protein is Formate--tetrahydrofolate ligase.